We begin with the raw amino-acid sequence, 416 residues long: Probable glucan 1,3-beta-glucosidase A (416 aa).

The signal sequence occupies residues 1–21 (MLYNLSKAVLALSVLAASADA). Catalysis depends on Glu209, which acts as the Proton donor. Disulfide bonds link Cys290–Cys415 and Cys316–Cys341. The Nucleophile role is filled by Glu308.

The protein belongs to the glycosyl hydrolase 5 (cellulase A) family. As to quaternary structure, monomer. It depends on Mn(2+) as a cofactor.

It localises to the secreted. The enzyme catalyses Successive hydrolysis of beta-D-glucose units from the non-reducing ends of (1-&gt;3)-beta-D-glucans, releasing alpha-glucose.. Functionally, beta-glucanases participate in the metabolism of beta-glucan, the main structural component of the cell wall. It could also function biosynthetically as a transglycosylase. This Aspergillus terreus (strain NIH 2624 / FGSC A1156) protein is Probable glucan 1,3-beta-glucosidase A (exgA).